Here is a 64-residue protein sequence, read N- to C-terminus: Toxin Tce3 (64 aa).

In terms of domain architecture, LCN-type CS-alpha/beta spans 1 to 62; sequence KDGYIIEHRG…IFDSNNNKCS (62 aa). 4 cysteine pairs are disulfide-bonded: cysteine 11-cysteine 61, cysteine 15-cysteine 37, cysteine 23-cysteine 42, and cysteine 27-cysteine 44.

The protein belongs to the long (4 C-C) scorpion toxin superfamily. Sodium channel inhibitor family. Beta subfamily. In terms of tissue distribution, expressed by the venom gland.

The protein resides in the secreted. Inhibits the sodium (Nav) currents in an apparent irreversible manner. Produces small depolarization and induces repetitive firing in squid axons. Is specific for arthropods (crickets, triatomides, crabs and squids), but is non-toxic to mice. Shows antibacterial activity against both Gram-positive and Gram-negative bacteria. The sequence is that of Toxin Tce3 from Tityus cerroazul (Scorpion).